A 147-amino-acid chain; its full sequence is Small ribosomal subunit protein uS5 (147 aa).

The S5 DRBM domain maps to 9–72; it reads FEEVIVDIGR…DDAFKNIVEV (64 aa).

It belongs to the universal ribosomal protein uS5 family. Part of the 30S ribosomal subunit. Contacts proteins S4 and S8.

With S4 and S12 plays an important role in translational accuracy. Functionally, located at the back of the 30S subunit body where it stabilizes the conformation of the head with respect to the body. This is Small ribosomal subunit protein uS5 from Campylobacter jejuni subsp. jejuni serotype O:6 (strain 81116 / NCTC 11828).